The chain runs to 67 residues: Large ribosomal subunit protein bL35 (67 aa).

Belongs to the bacterial ribosomal protein bL35 family.

This chain is Large ribosomal subunit protein bL35, found in Acidiphilium cryptum (strain JF-5).